Reading from the N-terminus, the 242-residue chain is Phosphoribosylaminoimidazole-succinocarboxamide synthase (242 aa).

It belongs to the SAICAR synthetase family.

The enzyme catalyses 5-amino-1-(5-phospho-D-ribosyl)imidazole-4-carboxylate + L-aspartate + ATP = (2S)-2-[5-amino-1-(5-phospho-beta-D-ribosyl)imidazole-4-carboxamido]succinate + ADP + phosphate + 2 H(+). It functions in the pathway purine metabolism; IMP biosynthesis via de novo pathway; 5-amino-1-(5-phospho-D-ribosyl)imidazole-4-carboxamide from 5-amino-1-(5-phospho-D-ribosyl)imidazole-4-carboxylate: step 1/2. The sequence is that of Phosphoribosylaminoimidazole-succinocarboxamide synthase from Prochlorococcus marinus subsp. pastoris (strain CCMP1986 / NIES-2087 / MED4).